Reading from the N-terminus, the 448-residue chain is uncharacterized protein (448 aa).

Component of the acid-insoluble and acid-soluble organic matrix of the aragonitic skeleton (at protein level).

Its subcellular location is the secreted. This is an uncharacterized protein from Acropora millepora (Staghorn coral).